Reading from the N-terminus, the 769-residue chain is Serine protease HtrA-like (769 aa).

Positions 1–20 are enriched in basic residues; that stretch reads MDIGKKHVIPKSQYRRKRRE. Positions 1–390 are disordered; it reads MDIGKKHVIP…ATSKLNKGRA (390 aa). Composition is skewed to basic and acidic residues over residues 21–64 and 71–108; these read FFHN…ERFK and LEQR…DVSK. The span at 126–137 shows a compositional bias: polar residues; sequence YEQNSEATLSTK. A compositionally biased stretch (basic and acidic residues) spans 138–186; the sequence is STDKVESSDMRKLSPDKNKVGHEEQHVLSKPSEHDKETRIDFESSRTDS. Polar residues-rich tracts occupy residues 202–221 and 247–262; these read GNES…NTVP and QQSQ…YGDS. A compositionally biased stretch (basic and acidic residues) spans 264–295; that stretch reads QNDKSNHENDLSHHTPSKSDDKDNVMREDHIV. Residues 298 to 308 are compositionally biased toward polar residues; the sequence is NPDNDINTPSL. The span at 310–330 shows a compositional bias: basic and acidic residues; it reads KIDDDRKLDEKIHVEDKHKQN. The span at 331-347 shows a compositional bias: polar residues; sequence ADSSETVGYQSQSSVSH. Positions 348 to 362 are enriched in basic and acidic residues; that stretch reads RSTEKRNMAINDHHK. The segment covering 366-390 has biased composition (polar residues); that stretch reads QKLNTKTSANNNQKKATSKLNKGRA. The helical transmembrane segment at 410-430 threads the bilayer; it reads LVILMGIIILIVILNAIFNNV. Catalysis depends on charge relay system residues histidine 504, aspartate 534, and serine 619. Positions 680-733 constitute a PDZ domain; it reads IASLNSFERQAVKLPGKVKNGVVVDQVDNNGLADQSSLKKGDVITELDGKLLED.

The protein belongs to the peptidase S1C family.

It is found in the cell membrane. The chain is Serine protease HtrA-like from Staphylococcus aureus (strain bovine RF122 / ET3-1).